Reading from the N-terminus, the 192-residue chain is Ubiquitin-conjugating enzyme E2 1 (192 aa).

The disordered stretch occupies residues 1 to 28; it reads MTTPSRRRLMRDFKKLQEDPPAGVSGAP. The region spanning 4–150 is the UBC core domain; the sequence is PSRRRLMRDF…VQQIVEQSWL (147 aa). Residue cysteine 88 is the Glycyl thioester intermediate of the active site. A disordered region spans residues 171–192; the sequence is AAPGANDADDDRMDEGASGSNA.

It belongs to the ubiquitin-conjugating enzyme family. Interacts with ubr-1 and rfp-1. Interacts with ubc-13.

It carries out the reaction S-ubiquitinyl-[E1 ubiquitin-activating enzyme]-L-cysteine + [E2 ubiquitin-conjugating enzyme]-L-cysteine = [E1 ubiquitin-activating enzyme]-L-cysteine + S-ubiquitinyl-[E2 ubiquitin-conjugating enzyme]-L-cysteine.. The protein operates within protein modification; protein ubiquitination. Functionally, catalyzes the covalent attachment of ubiquitin to other proteins. The polypeptide is Ubiquitin-conjugating enzyme E2 1 (ubc-1) (Caenorhabditis elegans).